The chain runs to 480 residues: Bifunctional pantoate ligase/cytidylate kinase (480 aa).

Positions 1 to 243 (MPTMGGLHQG…CGTTRLIDHV (243 aa)) are pantoate--beta-alanine ligase. 4 to 11 (MGGLHQGH) contacts ATP. The active-site Proton donor is His-11. (R)-pantoate is bound at residue Gln-34. Gln-34 contacts beta-alanine. 123–126 (GEKD) lines the ATP pocket. Position 129 (Gln-129) interacts with (R)-pantoate. Residues Val-152 and 160–163 (LSSR) contribute to the ATP site. Residues 244–480 (FLMTRQPLVA…GEEAWPTPAG (237 aa)) form a cytidylate kinase region.

In the N-terminal section; belongs to the pantothenate synthetase family. It in the C-terminal section; belongs to the cytidylate kinase family. Type 1 subfamily.

It localises to the cytoplasm. It carries out the reaction (R)-pantoate + beta-alanine + ATP = (R)-pantothenate + AMP + diphosphate + H(+). The catalysed reaction is CMP + ATP = CDP + ADP. The enzyme catalyses dCMP + ATP = dCDP + ADP. It functions in the pathway cofactor biosynthesis; (R)-pantothenate biosynthesis; (R)-pantothenate from (R)-pantoate and beta-alanine: step 1/1. In terms of biological role, catalyzes the condensation of pantoate with beta-alanine in an ATP-dependent reaction via a pantoyl-adenylate intermediate. Functionally, catalyzes the transfer of a phosphate group from ATP to either CMP or dCMP to form CDP or dCDP and ADP, respectively. This chain is Bifunctional pantoate ligase/cytidylate kinase, found in Synechococcus sp. (strain CC9605).